Consider the following 95-residue polypeptide: Cliotide T5 (95 aa).

The segment at residues 1–30 is a cross-link (cyclopeptide (Gly-Asn)); that stretch reads GIPCGESCVFIPCISTVIGCSCKNKVCYRN. 3 cysteine pairs are disulfide-bonded: Cys-4–Cys-20, Cys-8–Cys-22, and Cys-13–Cys-27. Positions 31–95 are cleaved as a propeptide — removed in mature form; it reads HVIAAEAKTM…KDHLKMSITN (65 aa).

Contains 3 disulfide bonds. In terms of processing, this is a cyclic peptide. In terms of tissue distribution, expressed in stem, shoot, root, leaf, pod and nodule but not in flower and seed (at protein level).

Probably participates in a plant defense mechanism. This is Cliotide T5 from Clitoria ternatea (Butterfly pea).